We begin with the raw amino-acid sequence, 330 residues long: Putative glycosyltransferase HI_0258 (330 aa).

Positions Met1–Asp31 are enriched in basic and acidic residues. The segment at Met1–Gly32 is disordered. UDP-binding positions include Ser44–Tyr49 and Asp140–Val141. Positions 140, 142, and 270 each coordinate Mn(2+). His270–Lys276 lines the UDP pocket.

Belongs to the glycosyltransferase 8 family.

The sequence is that of Putative glycosyltransferase HI_0258 from Haemophilus influenzae (strain ATCC 51907 / DSM 11121 / KW20 / Rd).